The chain runs to 638 residues: Chaperone protein HtpG (638 aa).

The tract at residues 1–344 (MQKKETLEFQ…SNDLPLNVSR (344 aa)) is a; substrate-binding. The b stretch occupies residues 345-560 (EILQNNENIY…ENDITTQMSK (216 aa)). The c stretch occupies residues 561–638 (LLISTGQESP…LLLSNIIRLN (78 aa)).

This sequence belongs to the heat shock protein 90 family. As to quaternary structure, homodimer.

The protein localises to the cytoplasm. In terms of biological role, molecular chaperone. Has ATPase activity. This chain is Chaperone protein HtpG, found in Wigglesworthia glossinidia brevipalpis.